The primary structure comprises 603 residues: Elongation factor 4 (603 aa).

The 183-residue stretch at 6-188 (KYVRNFSIIA…DIVKNVPAPI (183 aa)) folds into the tr-type G domain. GTP-binding positions include 18 to 23 (DHGKST) and 135 to 138 (NKID).

Belongs to the TRAFAC class translation factor GTPase superfamily. Classic translation factor GTPase family. LepA subfamily.

It localises to the cell membrane. The catalysed reaction is GTP + H2O = GDP + phosphate + H(+). Functionally, required for accurate and efficient protein synthesis under certain stress conditions. May act as a fidelity factor of the translation reaction, by catalyzing a one-codon backward translocation of tRNAs on improperly translocated ribosomes. Back-translocation proceeds from a post-translocation (POST) complex to a pre-translocation (PRE) complex, thus giving elongation factor G a second chance to translocate the tRNAs correctly. Binds to ribosomes in a GTP-dependent manner. The protein is Elongation factor 4 of Finegoldia magna (strain ATCC 29328 / DSM 20472 / WAL 2508) (Peptostreptococcus magnus).